A 211-amino-acid chain; its full sequence is Uracil phosphoribosyltransferase (211 aa).

5-phospho-alpha-D-ribose 1-diphosphate is bound by residues arginine 77, arginine 102, and 129–137 (DPMLATGGS). Uracil-binding positions include isoleucine 192 and 197–199 (GDA). Residue aspartate 198 coordinates 5-phospho-alpha-D-ribose 1-diphosphate.

Belongs to the UPRTase family. It depends on Mg(2+) as a cofactor.

It carries out the reaction UMP + diphosphate = 5-phospho-alpha-D-ribose 1-diphosphate + uracil. It participates in pyrimidine metabolism; UMP biosynthesis via salvage pathway; UMP from uracil: step 1/1. With respect to regulation, allosterically activated by GTP. Functionally, catalyzes the conversion of uracil and 5-phospho-alpha-D-ribose 1-diphosphate (PRPP) to UMP and diphosphate. The protein is Uracil phosphoribosyltransferase of Corynebacterium aurimucosum (strain ATCC 700975 / DSM 44827 / CIP 107346 / CN-1) (Corynebacterium nigricans).